We begin with the raw amino-acid sequence, 1829 residues long: MSAGGRDEERRKLADIIHHWNANRLDLFEISQPTEDLEFHGVMRFYFQDKAAGNFATKCIRVSSTATTQDVIETLAEKFRPDMRMLSSPKYSLYEVHVSGERRLDIDEKPLVVQLNWNKDDREGRFVLKNENDAIPAKKAQSNGPEKQEKEGVIQNFKRTLSKKEKKEKKKREKEALRQASDKEERPSQGDDSENSRLAAEVYKDMPETSFTRTISNPEVVMKRRRQQKLEKRMQEFRSSDGRPDSGGTLRIYADSLKPNIPYKTILLSTTDPADFAVAESLEKYGLEKENPKDYCIARVMLPPGAQHSDERGAKEIILDDDECPLQIFREWPSDKGILVFQLKRRPPDYIPKKMKKHVEGKPLKGKDRADGSGYGSALPPEKLPYLVELSPGRRNHFAYYSYHTYEDGSDSRDKPKLYRLQLSVTEVGTEKFDDNSIQLFGPGIQPHHCDLTNMDGVVTVTPRSMDAETYVDGQRISETTMLQSGMRLQFGTSHVFKFVDPIQDHVLSKRSVDGGLMVKGPRHKPGAVQETTFELGGDIHSGTALPASRSTTRLDSDRVSSASSTAERGMVKPMIRLDQEQDYRRRESRTQDAAGPELMLPASIEFRESSEDSFLSAIINYTNSSTVHFKLSPTYVLYMACRYVLSSQHRPDISPTERTHKAIAVVNKMVSMMEGVIQEVDQVDQKQKNIAGALAFWMANASELLNFIKQDRDLSRITLDAQDVLAHLVQMAFKYLVHCLQSELNNYMPAFLDDPEENSLQRPKIDDVLHTLTGAMSLLRRCRVNAALTIQLFSQLFHFINMWLFNRLVTDPDSGLCSHYWGAIIRQQLGHIEAWAEKQGLELAADCHLSRIVQATTLLTMDKYVPDDIPNINSTCFKLNSLQLQALLQNYHCAPDEPFIPTDLIENVVAVAENTADELARSDGRDVQLEEDPDLQLPFLLPEDGYSCDVVRNIPNGLQEFLDPLCQRGFCRLVPHTRSPGTWTIYFEGADYESHLMRENTELTQPLRKEPEVITVTLKKQNGMGLSIVAAKGAGQDKLGIYVKSVVKGGAADVDGRLAAGDQLLSVDGRSLVGLSQERAAELMTRTSSVVTLEVAKQGAIYHGLATLLNQPSPMMQRISDRRGSGKPRPKSEGFELYNNSAQNGSPESPQMPWTEYSEPKKLPGDDRLMKNRADHRSSPNVANQPPSPGGKSPYTSGTAAKITSVSTGNLCTEEQTPPPRPEAYPIPTQTYTREYFTFPASKSQDRMAPVQNQWPNYEEKPHMHTESDHASIAIQRVTRSQEELREEKVYQLERHRVESGMDRKCDSDMWINQSSSVESSTSSQEHLNHSSKSVTPASTLTKSGPGRWKTPAAVLPTPVAVSQPIRTDLPPPPPPPPAHYTSDFDGISMDLPLPPPPANQAAPQSAQVAAAERKKREEHQRWYEKEKARLEEERERKRREQERKLGQMRTQSLNPASFSPLATQAKPEKPSTLQRPQETVIRELQPQQQPRTIERRDLQYITISKEELSSGDSLSPDPWKRDAREKLEKQQQMHIVDMLSKEIHELQNKGDRTAEESDRLRKLMLEWQFQKRLQESKQKDEDDDEEEDDDVDTMLIMQRLEAERRARLQDEERRRQQQLEEMRKREVEDRVRQEEDGRHQEEERVKRDAEEKRRQEEGYYSRLEAERRRQHEEAARRLLEPEEPGLSRPPLPQDYEPPSQSSAPSAPPPPPQRNASYLKTQVLSPDSLFTAKFVAYDDDDEEENYVPAGPNSYSGSAGTTAGTYDAPRDTREKLSRSQDADLPGSSGAPENLTFRERQRLFSQGQDVSDKVKASRKLTELENELNTK.

Residues 39 to 133 (FHGVMRFYFQ…GRFVLKNEND (95 aa)) enclose the Ras-associating 1 domain. A disordered region spans residues 129–196 (KNENDAIPAK…PSQGDDSENS (68 aa)). A coiled-coil region spans residues 146-186 (EKQEKEGVIQNFKRTLSKKEKKEKKKREKEALRQASDKEER). A compositionally biased stretch (basic residues) spans 160-172 (TLSKKEKKEKKKR). The segment covering 173 to 189 (EKEALRQASDKEERPSQ) has biased composition (basic and acidic residues). Residues Ser-216, Ser-246, and Ser-256 each carry the phosphoserine modification. Residues 246-348 (SGGTLRIYAD…LVFQLKRRPP (103 aa)) form the Ras-associating 2 domain. Positions 356-371 (KKHVEGKPLKGKDRAD) are enriched in basic and acidic residues. Residues 356–377 (KKHVEGKPLKGKDRADGSGYGS) form a disordered region. Ser-391 and Ser-424 each carry phosphoserine. The FHA domain maps to 441-507 (FGPGIQPHHC…KFVDPIQDHV (67 aa)). Residues Ser-512, Ser-557, Ser-562, Ser-589, and Ser-655 each carry the phosphoserine modification. The interval 539–595 (DIHSGTALPASRSTTRLDSDRVSSASSTAERGMVKPMIRLDQEQDYRRRESRTQDAA) is disordered. Over residues 576–591 (IRLDQEQDYRRRESRT) the composition is skewed to basic and acidic residues. Residues 668–915 (NKMVSMMEGV…IENVVAVAEN (248 aa)) form the Dilute domain. The 87-residue stretch at 1014–1100 (VITVTLKKQN…VVTLEVAKQG (87 aa)) folds into the PDZ domain. 9 positions are modified to phosphoserine: Ser-1090, Ser-1114, Ser-1133, Ser-1147, Ser-1150, Ser-1179, Ser-1180, Ser-1189, and Ser-1206. Positions 1114–1230 (SPMMQRISDR…PRPEAYPIPT (117 aa)) are disordered. Residues 1120-1135 (ISDRRGSGKPRPKSEG) are compositionally biased toward basic and acidic residues. A compositionally biased stretch (polar residues) spans 1139 to 1150 (YNNSAQNGSPES). Over residues 1159–1179 (SEPKKLPGDDRLMKNRADHRS) the composition is skewed to basic and acidic residues. Residues 1195 to 1217 (PYTSGTAAKITSVSTGNLCTEEQ) show a composition bias toward polar residues. Phosphothreonine is present on residues Thr-1218 and Thr-1239. Residues Ser-1245 and Ser-1282 each carry the phosphoserine modification. A compositionally biased stretch (basic and acidic residues) spans 1300–1309 (ESGMDRKCDS). Disordered regions lie at residues 1300–1533 (ESGM…EKQQ) and 1574–1724 (RLQE…KTQV). Low complexity predominate over residues 1316-1325 (SSSVESSTSS). Polar residues predominate over residues 1332–1344 (SSKSVTPASTLTK). Ser-1335 carries the phosphoserine modification. Residue Thr-1337 is modified to Phosphothreonine. Positions 1371 to 1380 (LPPPPPPPPA) are enriched in pro residues. The segment covering 1401-1412 (NQAAPQSAQVAA) has biased composition (low complexity). The segment covering 1413-1447 (AERKKREEHQRWYEKEKARLEEERERKRREQERKL) has biased composition (basic and acidic residues). The stretch at 1417–1454 (KREEHQRWYEKEKARLEEERERKRREQERKLGQMRTQS) forms a coiled coil. A compositionally biased stretch (polar residues) spans 1450-1464 (MRTQSLNPASFSPLA). Residues 1494–1510 (TIERRDLQYITISKEEL) are compositionally biased toward basic and acidic residues. Ser-1506 and Ser-1517 each carry phosphoserine. Positions 1520 to 1533 (PWKRDAREKLEKQQ) are enriched in basic and acidic residues. The stretch at 1530–1564 (EKQQQMHIVDMLSKEIHELQNKGDRTAEESDRLRK) forms a coiled coil. Positions 1583–1594 (EDDDEEEDDDVD) are enriched in acidic residues. Residues 1600–1672 (QRLEAERRAR…SRLEAERRRQ (73 aa)) are a coiled coil. Basic and acidic residues predominate over residues 1602–1682 (LEAERRARLQ…HEEAARRLLE (81 aa)). Ser-1701 carries the phosphoserine modification. Over residues 1715–1724 (RNASYLKTQV) the composition is skewed to polar residues. Ser-1726 carries the post-translational modification Phosphoserine. The segment at 1742 to 1829 (DEEENYVPAG…TELENELNTK (88 aa)) is disordered. The segment covering 1753 to 1764 (NSYSGSAGTTAG) has biased composition (polar residues). A compositionally biased stretch (basic and acidic residues) spans 1768–1781 (APRDTREKLSRSQD). Phosphoserine is present on residues Ser-1779 and Ser-1804. Residues 1809-1829 (VSDKVKASRKLTELENELNTK) show a composition bias toward basic and acidic residues. Lys-1812 is modified (N6-acetyllysine).

In terms of assembly, homodimer. Interacts with F-actin, nectin and NECTIN3. Essential for the association of nectin and E-cadherin. Isoform 2/s-afadin does not interact with F-actin. Interacts with ZO-1 and occludin, but probably in an indirect manner. Interacts with RIT1, RIT2, NRXN1 and BCR. Interacts with ADAM10; the interaction locks ADAM10 at adherens junctions following ADAM10 recruitment to adherens junctions by TSPAN33. As to expression, isoform 1 is widely expressed, including in heart, brain, spleen, lung, liver, skeletal muscle, kidney and testis. Isoform 2 is mainly expressed in the brain.

It is found in the cell junction. Its subcellular location is the adherens junction. Its function is as follows. Belongs to an adhesion system, probably together with the E-cadherin-catenin system, which plays a role in the organization of homotypic, interneuronal and heterotypic cell-cell adherens junctions (AJs). Nectin- and actin-filament-binding protein that connects nectin to the actin cytoskeleton. May play a key role in the organization of epithelial structures of the embryonic ectoderm. Essential for the organization of adherens junctions. The chain is Afadin from Rattus norvegicus (Rat).